The sequence spans 298 residues: 3-hydroxyisobutyrate dehydrogenase (298 aa).

Residues 2–30 (TDIAFLGLGNMGGPMAANLLKAGHRVNVF), 65–66 (LP), and Thr-96 each bind NAD(+). Residue Lys-171 is part of the active site. Residue Lys-246 coordinates NAD(+).

It belongs to the HIBADH-related family.

The catalysed reaction is 3-hydroxy-2-methylpropanoate + NAD(+) = 2-methyl-3-oxopropanoate + NADH + H(+). The protein operates within amino-acid degradation; L-valine degradation. This chain is 3-hydroxyisobutyrate dehydrogenase, found in Pseudomonas aeruginosa (strain ATCC 15692 / DSM 22644 / CIP 104116 / JCM 14847 / LMG 12228 / 1C / PRS 101 / PAO1).